Consider the following 453-residue polypeptide: MLINPKEILETIQMVRMEHLDIRTVTMGISLRDCSHPDIEIFNENIYAKITSRAKDLVRTTNEIQSLYGIPIINRRISVTPIAIAAESCRSRDFVSIAKTMDEAAKEAGVDFIGGFSALVHKGETGGDLKLINSIPEALASTEKVCSSVNVATTKAGINMDAVGLMGKVIKKTAELTSDRDGIGCAKLVVFANAPDDNPFMAGAFHGIGEPECVINVGVSGPGVVNAAVCELENPDLTEISETIKRTAFKITRMGEMVGREVSRRLGVEFGILDLSLAPTPAIGDSVAAILEAMGLERCGAHGTTAALALLNDAVKKGGAMASSSVGGLSGAFIPVSEDAGMIEAVKAGALSLEKLEAMTCVCSVGLDMIAVPGDTPATTLSAIIADEMAIGVINKKTTAVRVIPAPGKEVGDSVEFGGLLGSAPVMPVSNFSSETFIKRGGRIPAPIQSLTN.

It belongs to the UPF0210 family.

This Methanosarcina mazei (strain ATCC BAA-159 / DSM 3647 / Goe1 / Go1 / JCM 11833 / OCM 88) (Methanosarcina frisia) protein is UPF0210 protein MM_0081.